A 168-amino-acid chain; its full sequence is Photosystem I assembly protein Ycf3 (168 aa).

TPR repeat units lie at residues 35 to 68, 72 to 105, and 120 to 153; these read AFAY…EIDP, SYIL…NPFL, and GEQA…TPGN.

It belongs to the Ycf3 family.

It localises to the plastid. Its subcellular location is the chloroplast thylakoid membrane. Functionally, essential for the assembly of the photosystem I (PSI) complex. May act as a chaperone-like factor to guide the assembly of the PSI subunits. This is Photosystem I assembly protein Ycf3 from Morus indica (Mulberry).